The following is a 262-amino-acid chain: Troponin T, slow skeletal muscle (262 aa).

Acidic residues predominate over residues Met1–Pro31. Disordered regions lie at residues Met1–Asp62 and Glu109–Val153. Ser2 is modified (phosphoserine; by CK2). The segment covering Val32–Lys41 has biased composition (basic and acidic residues). The span at Ser43 to Ile55 shows a compositional bias: pro residues. Positions Glu109 to Lys149 are enriched in basic and acidic residues.

Belongs to the troponin T family. As to quaternary structure, interacts with TPM3. In terms of tissue distribution, expressed in adult soleus muscle.

Functionally, troponin T is the tropomyosin-binding subunit of troponin, the thin filament regulatory complex which confers calcium-sensitivity to striated muscle actomyosin ATPase activity. This Mus musculus (Mouse) protein is Troponin T, slow skeletal muscle (Tnnt1).